The sequence spans 132 residues: Small ribosomal subunit protein uS8c (132 aa).

The protein belongs to the universal ribosomal protein uS8 family. As to quaternary structure, part of the 30S ribosomal subunit.

It is found in the plastid. The protein resides in the chloroplast. One of the primary rRNA binding proteins, it binds directly to 16S rRNA central domain where it helps coordinate assembly of the platform of the 30S subunit. This Illicium oligandrum (Star anise) protein is Small ribosomal subunit protein uS8c (rps8).